The chain runs to 99 residues: NADH-quinone oxidoreductase subunit K (99 aa).

The next 3 helical transmembrane spans lie at proline 3–valine 23, isoleucine 28–phenylalanine 48, and isoleucine 59–isoleucine 79.

It belongs to the complex I subunit 4L family. In terms of assembly, NDH-1 is composed of 14 different subunits. Subunits NuoA, H, J, K, L, M, N constitute the membrane sector of the complex.

It is found in the cell membrane. The catalysed reaction is a quinone + NADH + 5 H(+)(in) = a quinol + NAD(+) + 4 H(+)(out). Functionally, NDH-1 shuttles electrons from NADH, via FMN and iron-sulfur (Fe-S) centers, to quinones in the respiratory chain. The immediate electron acceptor for the enzyme in this species is believed to be a menaquinone. Couples the redox reaction to proton translocation (for every two electrons transferred, four hydrogen ions are translocated across the cytoplasmic membrane), and thus conserves the redox energy in a proton gradient. This Frankia casuarinae (strain DSM 45818 / CECT 9043 / HFP020203 / CcI3) protein is NADH-quinone oxidoreductase subunit K.